Here is a 273-residue protein sequence, read N- to C-terminus: Pantothenate synthetase (273 aa).

ATP is bound at residue 27–34; that stretch reads MGALHQGH. The active-site Proton donor is His-34. Gln-58 is a (R)-pantoate binding site. Gln-58 is a beta-alanine binding site. Residue 144-147 coordinates ATP; that stretch reads GKKD. Residue Gln-150 participates in (R)-pantoate binding. ATP contacts are provided by residues Val-173 and 181–184; that span reads LSSR.

Belongs to the pantothenate synthetase family. As to quaternary structure, homodimer.

Its subcellular location is the cytoplasm. It carries out the reaction (R)-pantoate + beta-alanine + ATP = (R)-pantothenate + AMP + diphosphate + H(+). The protein operates within cofactor biosynthesis; (R)-pantothenate biosynthesis; (R)-pantothenate from (R)-pantoate and beta-alanine: step 1/1. Its function is as follows. Catalyzes the condensation of pantoate with beta-alanine in an ATP-dependent reaction via a pantoyl-adenylate intermediate. This chain is Pantothenate synthetase, found in Nitratiruptor sp. (strain SB155-2).